A 311-amino-acid chain; its full sequence is Phospholipid phosphatase 3 (311 aa).

Over Met1–Arg33 the chain is Cytoplasmic. Ser19 is subject to Phosphoserine. A helical transmembrane segment spans residues Val34–Ile54. Topologically, residues Glu55–Asp85 are extracellular. The chain crosses the membrane as a helical span at residues Ala86–Tyr106. Over Arg107–Tyr122 the chain is Cytoplasmic. A Dityrosine basolateral targeting motif motif is present at residues Tyr109–Tyr110. The chain crosses the membrane as a helical span at residues Val123–Phe143. The Extracellular segment spans residues Thr144–Lys193. A phosphatase sequence motif I region spans residues Lys148–Pro156. The N-linked (GlcNAc...) asparagine glycan is linked to Asn170. Positions Arg182–Asp184 match the Integrin-binding motif motif. Residues Ser194 to Leu214 traverse the membrane as a helical segment. The segment at Phe196–His199 is phosphatase sequence motif II. His199 functions as the Proton donors in the catalytic mechanism. Residues Gln215–Leu225 are Cytoplasmic-facing. A helical membrane pass occupies residues Leu226–Leu243. The phosphatase sequence motif III stretch occupies residues Ser244–Asp255. The Extracellular portion of the chain corresponds to Ser244–Leu257. His251 (nucleophile) is an active-site residue. A helical membrane pass occupies residues Ala258–Phe278. The tract at residues Ser275–Met311 is mediates interaction with CTNND1. Residues Lys279 to Met311 lie on the Cytoplasmic side of the membrane.

The protein belongs to the PA-phosphatase related phosphoesterase family. Forms functional homodimers and homooligomers that are not required for substrate recognition and catalytic activity. Can also form heterooligomers with other PLPP2 and PLPP3. Interacts with CTNND1; negatively regulates the PLPP3-mediated stabilization of beta-catenin/CTNNB1. N-glycosylated. Contains high-mannose oligosaccharides. As to expression, ubiquitously expressed. Highly expressed in heart and placenta.

It localises to the cell membrane. Its subcellular location is the basolateral cell membrane. The protein localises to the endoplasmic reticulum membrane. It is found in the endoplasmic reticulum-Golgi intermediate compartment membrane. The protein resides in the golgi apparatus membrane. It localises to the golgi apparatus. Its subcellular location is the trans-Golgi network membrane. The protein localises to the membrane raft. It catalyses the reaction a 1,2-diacyl-sn-glycero-3-phosphate + H2O = a 1,2-diacyl-sn-glycerol + phosphate. It carries out the reaction 1,2-dihexadecanoyl-sn-glycero-3-phosphate + H2O = 1,2-dihexadecanoyl-sn-glycerol + phosphate. The enzyme catalyses 1,2-di-(9Z-octadecenoyl)-sn-glycero-3-phosphate + H2O = 1,2-di-(9Z-octadecenoyl)-sn-glycerol + phosphate. The catalysed reaction is a monoacyl-sn-glycero-3-phosphate + H2O = a monoacylglycerol + phosphate. It catalyses the reaction (9Z)-octadecenoyl-sn-glycero-3-phosphate + H2O = (9Z-octadecenoyl)-glycerol + phosphate. It carries out the reaction sphing-4-enine 1-phosphate + H2O = sphing-4-enine + phosphate. The enzyme catalyses an N-acylsphing-4-enine 1-phosphate + H2O = an N-acylsphing-4-enine + phosphate. The catalysed reaction is N-(octanoyl)-sphing-4-enine-1-phosphate + H2O = N-octanoylsphing-4-enine + phosphate. It catalyses the reaction N-(9Z-octadecenoyl)-ethanolamine phosphate + H2O = N-(9Z-octadecenoyl) ethanolamine + phosphate. It functions in the pathway lipid metabolism; phospholipid metabolism. Its activity is regulated as follows. Magnesium-independent phospholipid phosphatase. Insensitive to N-ethylmaleimide. Inhibited by sphingosine, zinc ions and modestly by propanolol. Functionally, magnesium-independent phospholipid phosphatase of the plasma membrane that catalyzes the dephosphorylation of a variety of glycerolipid and sphingolipid phosphate esters including phosphatidate/PA, lysophosphatidate/LPA, diacylglycerol pyrophosphate/DGPP, sphingosine 1-phosphate/S1P and ceramide 1-phosphate/C1P. Also acts on N-oleoyl ethanolamine phosphate/N-(9Z-octadecenoyl)-ethanolamine phosphate, a potential physiological compound. Has both an extracellular and an intracellular phosphatase activity, allowing the hydrolysis and the cellular uptake of these bioactive lipid mediators from the milieu, regulating signal transduction in different cellular processes. Through the dephosphorylation of extracellular sphingosine-1-phosphate and the regulation of its extra- and intracellular availability, plays a role in vascular homeostasis, regulating endothelial cell migration, adhesion, survival, proliferation and the production of pro-inflammatory cytokines. By maintaining the appropriate levels of this lipid in the cerebellum, also ensure its proper development and function. Through its intracellular lipid phosphatase activity may act in early compartments of the secretory pathway, regulating the formation of Golgi to endoplasmic reticulum retrograde transport carriers. Independently of this phosphatase activity may also function in the Wnt signaling pathway and the stabilization of beta-catenin/CTNNB1, thereby regulating cell proliferation, migration and differentiation in angiogenesis or yet in tumor growth. Also plays a role in integrin-mediated cell-cell adhesion in angiogenesis. This Homo sapiens (Human) protein is Phospholipid phosphatase 3.